Consider the following 664-residue polypeptide: Alpha-1,4-glucan:maltose-1-phosphate maltosyltransferase (664 aa).

Alpha-maltose 1-phosphate is bound by residues Lys-261, Gln-321, and Asp-356. Asp-393 acts as the Nucleophile in catalysis. Asn-394 serves as a coordination point for alpha-maltose 1-phosphate. The active-site Proton donor is the Glu-422. 533–534 contacts alpha-maltose 1-phosphate; that stretch reads KY.

It belongs to the glycosyl hydrolase 13 family. GlgE subfamily. As to quaternary structure, homodimer.

It catalyses the reaction alpha-maltose 1-phosphate + [(1-&gt;4)-alpha-D-glucosyl](n) = [(1-&gt;4)-alpha-D-glucosyl](n+2) + phosphate. Functionally, maltosyltransferase that uses maltose 1-phosphate (M1P) as the sugar donor to elongate linear or branched alpha-(1-&gt;4)-glucans. Is involved in a branched alpha-glucan biosynthetic pathway from trehalose, together with TreS, Mak and GlgB. The polypeptide is Alpha-1,4-glucan:maltose-1-phosphate maltosyltransferase (Pseudomonas aeruginosa (strain ATCC 15692 / DSM 22644 / CIP 104116 / JCM 14847 / LMG 12228 / 1C / PRS 101 / PAO1)).